Here is a 503-residue protein sequence, read N- to C-terminus: UDP-N-acetylmuramoylalanine--D-glutamate ligase (503 aa).

Residue 129–135 (GTNGKTT) participates in ATP binding.

It belongs to the MurCDEF family.

Its subcellular location is the cytoplasm. It carries out the reaction UDP-N-acetyl-alpha-D-muramoyl-L-alanine + D-glutamate + ATP = UDP-N-acetyl-alpha-D-muramoyl-L-alanyl-D-glutamate + ADP + phosphate + H(+). Its pathway is cell wall biogenesis; peptidoglycan biosynthesis. Cell wall formation. Catalyzes the addition of glutamate to the nucleotide precursor UDP-N-acetylmuramoyl-L-alanine (UMA). This is UDP-N-acetylmuramoylalanine--D-glutamate ligase from Burkholderia orbicola (strain MC0-3).